A 223-amino-acid polypeptide reads, in one-letter code: Endonuclease V (223 aa).

Mg(2+) is bound by residues Asp-35 and Asp-103.

It belongs to the endonuclease V family. The cofactor is Mg(2+).

Its subcellular location is the cytoplasm. The catalysed reaction is Endonucleolytic cleavage at apurinic or apyrimidinic sites to products with a 5'-phosphate.. DNA repair enzyme involved in the repair of deaminated bases. Selectively cleaves double-stranded DNA at the second phosphodiester bond 3' to a deoxyinosine leaving behind the intact lesion on the nicked DNA. The chain is Endonuclease V from Salmonella paratyphi A (strain ATCC 9150 / SARB42).